Here is a 1010-residue protein sequence, read N- to C-terminus: Protein CROWDED NUCLEI 4 (1010 aa).

2 coiled-coil regions span residues 82–350 and 404–763; these read LLLL…LIQN and EKEH…NLER. 2 short sequence motifs (nuclear localization signal) span residues 445–452 and 679–686; these read NRKTTMLE and LKRLDAER. Disordered stretches follow at residues 787–813, 839–937, and 966–994; these read GVST…PSSA, HYEE…TQTP, and DCSE…GINA. The span at 849–863 shows a compositional bias: basic and acidic residues; it reads EKLKLESSRREEKAY. 2 stretches are compositionally biased toward polar residues: residues 883–893 and 912–921; these read NTSGDETSEPS and TQSVISSPQN.

It belongs to the CRWN family. Core component of the LINC complex which is composed of inner nuclear membrane SUN domain-containing proteins coupled to outer nuclear membrane WIP proteins, the nucleoskeletal CRWN/LINC proteins, and, possibly, KAKU4. Binds to KAKU4. In terms of tissue distribution, expressed at low levels in roots, leaves, flowers and flower stalks.

It is found in the nucleus membrane. It localises to the nucleus. The protein resides in the nucleoplasm. The protein localises to the nucleus lamina. Its subcellular location is the cytoplasm. Functionally, component of SUN-protein-containing multivariate complexes also called LINC complexes which link the nucleoskeleton and cytoskeleton by providing versatile outer nuclear membrane attachment sites for cytoskeletal filaments. Required for nucleus structure organization (e.g. size and shape). Involved in the maintenance of interphase chromocenter integrity and organization. In Arabidopsis thaliana (Mouse-ear cress), this protein is Protein CROWDED NUCLEI 4.